We begin with the raw amino-acid sequence, 393 residues long: NAD(P)H-quinone oxidoreductase subunit H, chloroplastic (393 aa).

Belongs to the complex I 49 kDa subunit family. NDH is composed of at least 16 different subunits, 5 of which are encoded in the nucleus.

It localises to the plastid. Its subcellular location is the chloroplast thylakoid membrane. It carries out the reaction a plastoquinone + NADH + (n+1) H(+)(in) = a plastoquinol + NAD(+) + n H(+)(out). It catalyses the reaction a plastoquinone + NADPH + (n+1) H(+)(in) = a plastoquinol + NADP(+) + n H(+)(out). NDH shuttles electrons from NAD(P)H:plastoquinone, via FMN and iron-sulfur (Fe-S) centers, to quinones in the photosynthetic chain and possibly in a chloroplast respiratory chain. The immediate electron acceptor for the enzyme in this species is believed to be plastoquinone. Couples the redox reaction to proton translocation, and thus conserves the redox energy in a proton gradient. The chain is NAD(P)H-quinone oxidoreductase subunit H, chloroplastic from Anthoceros angustus (Hornwort).